Consider the following 1021-residue polypeptide: Putative 115 kDa protein in type-1 retrotransposable element R1DM (1021 aa).

A Reverse transcriptase domain is found at 479 to 741 (RCIRLGYFPA…RSCRYLGITV (263 aa)). The segment at 955–971 (CACGDPYEDWMHILCAC) is gag-like cysteine motif.

In Drosophila melanogaster (Fruit fly), this protein is Putative 115 kDa protein in type-1 retrotransposable element R1DM (R1A1-element\ORF2).